The sequence spans 397 residues: Metal tolerance protein 4 (397 aa).

Positions 1 to 19 are enriched in basic and acidic residues; sequence MEAKGENDARAPLLAERRR. Positions 1–27 are disordered; the sequence is MEAKGENDARAPLLAERRRNSVGSMRG. Over 1–104 the chain is Cytoplasmic; it reads MEAKGENDAR…EQKQSEFAMK (104 aa). A helical membrane pass occupies residues 105 to 122; it reads ISNYANMILLALKIYATI. The Vacuolar segment spans residues 123 to 126; the sequence is KSGS. A helical membrane pass occupies residues 127–147; the sequence is IAIAASTLDSLLDLMAGGILW. Residues 148–170 are Cytoplasmic-facing; that stretch reads FTHLSMKSINVYKYPIGKLRVQP. A helical transmembrane segment spans residues 171-191; it reads VGIIIFAAVMATLGFQVFVQA. Over 192–208 the chain is Vacuolar; the sequence is VEKLIVNETPDKLTPVQ. Residues 209 to 229 form a helical membrane-spanning segment; that stretch reads LTWLYSIMIFATVVKLALWLY. Residues 230–248 lie on the Cytoplasmic side of the membrane; it reads CRTSGNKIVRAYAKDHYFD. The chain crosses the membrane as a helical span at residues 249–269; sequence VVTNVVGLAAAVLGDMFYWWI. Position 270 (aspartate 270) is a topological domain, vacuolar. Residues 271–291 traverse the membrane as a helical segment; sequence PVGAIALAVYTITNWSGTVWE. Over 292-397 the chain is Cytoplasmic; it reads NAVSLVGESA…ILSKLPSSQP (106 aa).

Belongs to the cation diffusion facilitator (CDF) transporter (TC 2.A.4) family. SLC30A subfamily.

The protein localises to the vacuole membrane. In terms of biological role, involved in sequestration of excess metal in the cytoplasm into vacuoles to maintain metal homeostasis. This chain is Metal tolerance protein 4 (MTP4), found in Oryza sativa subsp. japonica (Rice).